A 248-amino-acid chain; its full sequence is Chromatin target of PRMT1 protein (248 aa).

N-acetylalanine is present on A2. T33 is modified (phosphothreonine). Phosphoserine is present on residues S40, S49, and S64. K70 participates in a covalent cross-link: Glycyl lysine isopeptide (Lys-Gly) (interchain with G-Cter in SUMO2). The interval 151–204 (LRRGGVRGRGGPGRGGLGRGAMGRGGIGGRGRGMIGRGRGGFGGRGRGRGRGRG) is disordered. The interaction with PRMT1 stretch occupies residues 153 to 206 (RGGVRGRGGPGRGGLGRGAMGRGGIGGRGRGMIGRGRGGFGGRGRGRGRGRGAL). Over residues 157–195 (RGRGGPGRGGLGRGAMGRGGIGGRGRGMIGRGRGGFGGR) the composition is skewed to gly residues. A GAR motif; involved in 5hmC binding motif is present at residues 194–203 (GRGRGRGRGR). At T242 the chain carries Phosphothreonine.

Interacts with PRMT1 and PRMT5. Interacts with the 5FMC complex; the interaction is methylation-dependent. Interacts with FYTTD1, SET and PRC1 complex members CBX4, RNF2 and PHC2; the interactions are methylation-independent. Interacts with ZNF148. Component of the transcription/export (TREX) complex at least composed of ALYREF/THOC4, DDX39B, SARNP/CIP29, CHTOP and the THO subcomplex; TREX seems to have dynamic structure involving ATP-dependent remodeling; in the complex interacts (methylated) with ALYREF/THOC4 and with DDX39B in a methylation-independent manner. Interacts (methylated) with NXF1; the interaction is mutually exclusive with the NXF1:THOC5 interaction. Interacts with WDR77 and ERH. In terms of processing, asymmetrically methylated by PRMT1. Symmetrically methylated by PRMT5. Expressed in an erythroid progenitor cell line derived from peripheral blood. Expressed in glioblastoma cells.

It is found in the nucleus. It localises to the nucleolus. The protein localises to the nucleoplasm. The protein resides in the nucleus speckle. Plays an important role in the ligand-dependent activation of estrogen receptor target genes. May play a role in the silencing of fetal globin genes. Recruits the 5FMC complex to ZNF148, leading to desumoylation of ZNF148 and subsequent transactivation of ZNF148 target genes. Plays an important role in the tumorigenicity of glioblastoma cells. Binds to 5-hydroxymethylcytosine (5hmC) and associates with the methylosome complex containing PRMT1, PRMT5, MEP50 and ERH. The CHTOP-methylosome complex associated with 5hmC is recruited to selective sites on the chromosome, where it methylates H4R3 and activates the transcription of genes involved in glioblastomagenesis. In terms of biological role, required for effective mRNA nuclear export and is a component of the TREX complex which is thought to couple mRNA transcription, processing and nuclear export, and specifically associates with spliced mRNA and not with unspliced pre-mRNA. TREX is recruited to spliced mRNAs by a transcription-independent mechanism, binds to mRNA upstream of the exon-junction complex (EJC) and is recruited in a splicing- and cap-dependent manner to a region near the 5' end of the mRNA where it functions in mRNA export to the cytoplasm via the TAP/NFX1 pathway. The TREX complex is essential for the export of Kaposi's sarcoma-associated herpesvirus (KSHV) intronless mRNAs and infectious virus production. Stimulates DDX39B ATPase and helicase activities. In cooperation with ALYREF/THOC4 enhances NXF1 RNA binding activity. The protein is Chromatin target of PRMT1 protein (CHTOP) of Homo sapiens (Human).